The chain runs to 22 residues: Putative lactoylglutathione lyase (22 aa).

A disordered region spans residues 1–22 (ITACLDPDGWKEPGPLPGISTK). Catalysis depends on glutamate 12, which acts as the Proton donor/acceptor.

The protein belongs to the glyoxalase I family. Zn(2+) is required as a cofactor.

It catalyses the reaction (R)-S-lactoylglutathione = methylglyoxal + glutathione. The protein operates within secondary metabolite metabolism; methylglyoxal degradation; (R)-lactate from methylglyoxal: step 1/2. Its function is as follows. Catalyzes the conversion of hemimercaptal, formed from methylglyoxal and glutathione, to S-lactoylglutathione. This chain is Putative lactoylglutathione lyase, found in Pinus strobus (Eastern white pine).